The sequence spans 261 residues: Ribonuclease 3 (261 aa).

An RNase III domain is found at Tyr20 to Gly144. A Mg(2+)-binding site is contributed by Glu62. Residue Asp66 is part of the active site. Mg(2+)-binding residues include Asn130 and Glu133. The active site involves Glu133. The 70-residue stretch at Asn172–Thr241 folds into the DRBM domain.

The protein belongs to the ribonuclease III family. In terms of assembly, homodimer. It depends on Mg(2+) as a cofactor.

The protein localises to the cytoplasm. The enzyme catalyses Endonucleolytic cleavage to 5'-phosphomonoester.. Functionally, digests double-stranded RNA. Involved in the processing of primary rRNA transcript to yield the immediate precursors to the large and small rRNAs (23S and 16S). Processes some mRNAs, and tRNAs when they are encoded in the rRNA operon. Processes pre-crRNA and tracrRNA of type II CRISPR loci if present in the organism. This Azobacteroides pseudotrichonymphae genomovar. CFP2 protein is Ribonuclease 3.